Consider the following 471-residue polypeptide: Putative multidrug resistance protein MdtD (471 aa).

At 1 to 11 (MTDLPDSTRWQ) the chain is on the periplasmic side. The helical transmembrane segment at 12 to 32 (LWIVAFGFFMQSLDTTIVNTA) threads the bilayer. Over 33–48 (LPSMAQSLGESPLHMH) the chain is Cytoplasmic. The helical transmembrane segment at 49 to 69 (MVIVSYVLTVAVMLPASGWLA) threads the bilayer. At 70–76 (DKVGVRN) the chain is on the periplasmic side. Residues 77 to 97 (IFFTAIVLFTLGSLFCALSGT) traverse the membrane as a helical segment. At 98-101 (LNEL) the chain is on the cytoplasmic side. The chain crosses the membrane as a helical span at residues 102–124 (LLARALQGVGGAMMVPVGRLTVM). The Periplasmic portion of the chain corresponds to 125–137 (KIVPREQYMAAMT). A helical transmembrane segment spans residues 138 to 158 (FVTLPGQVGPLLGPALGGLLV). Residues 159-164 (EYASWH) are Cytoplasmic-facing. The chain crosses the membrane as a helical span at residues 165-185 (WIFLINIPVGIIGAIATLMLM). The Periplasmic segment spans residues 186–196 (PNYTMQTRRFD). Residues 197–217 (LSGFLLLAVGMAVLTLALDGS) traverse the membrane as a helical segment. Over 218–224 (KGTGLSP) the chain is Cytoplasmic. The helical transmembrane segment at 225 to 245 (LAITGLVAVGVVALVLYLLHA) threads the bilayer. Residues 246-262 (RNNNRALFSLKLFRTRT) lie on the Periplasmic side of the membrane. Residues 263–283 (FSLGLAGSFAGRIGSGMLPFM) form a helical membrane-spanning segment. Topologically, residues 284 to 285 (TP) are cytoplasmic. Residues 286 to 306 (VFLQIGLGFSPFHAGLMMIPM) traverse the membrane as a helical segment. Residues 307–341 (VLGSMGMKRIVVQVVNRFGYRRVLVATTLGLSLVT) lie on the Periplasmic side of the membrane. A helical transmembrane segment spans residues 342–362 (LLFMTTALLGWYYVLPFVLFL). Topologically, residues 363 to 395 (QGMVNSTRFSSMNTLTLKDLPDNLASSGNSLLS) are cytoplasmic. The chain crosses the membrane as a helical span at residues 396 to 416 (MIMQLSMSIGVTIAGLLLGLF). The Periplasmic segment spans residues 417-430 (GSQHVSVDSSTTQT). The helical transmembrane segment at 431–451 (VFMYTWLSMAFIIALPAFIFA) threads the bilayer. Residues 452 to 471 (RVPNDTHQNVAISRRKRSAQ) lie on the Cytoplasmic side of the membrane.

This sequence belongs to the major facilitator superfamily. TCR/Tet family.

It is found in the cell inner membrane. This chain is Putative multidrug resistance protein MdtD, found in Escherichia coli O157:H7.